The primary structure comprises 185 residues: Photosystem I assembly protein Ycf4 (185 aa).

A run of 3 helical transmembrane segments spans residues 22–42 (FFFA…GFSS), 57–77 (ILFV…LFFS), and 101–121 (FYVF…LRVP).

Belongs to the Ycf4 family.

The protein resides in the plastid. Its subcellular location is the chloroplast thylakoid membrane. In terms of biological role, seems to be required for the assembly of the photosystem I complex. The sequence is that of Photosystem I assembly protein Ycf4 from Gnetum parvifolium (Small-leaved jointfir).